We begin with the raw amino-acid sequence, 341 residues long: Ferrochelatase (341 aa).

The Fe cation site is built by His210 and Glu291.

Belongs to the ferrochelatase family.

The protein localises to the cytoplasm. It catalyses the reaction heme b + 2 H(+) = protoporphyrin IX + Fe(2+). It participates in porphyrin-containing compound metabolism; protoheme biosynthesis; protoheme from protoporphyrin-IX: step 1/1. Functionally, catalyzes the ferrous insertion into protoporphyrin IX. The chain is Ferrochelatase from Alcanivorax borkumensis (strain ATCC 700651 / DSM 11573 / NCIMB 13689 / SK2).